A 387-amino-acid chain; its full sequence is Formate-dependent phosphoribosylglycinamide formyltransferase (387 aa).

N(1)-(5-phospho-beta-D-ribosyl)glycinamide is bound by residues 21-22 (EL) and glutamate 81. Residues arginine 113, lysine 154, 159 to 164 (SSGHGQ), 193 to 196 (EEFI), and glutamate 201 contribute to the ATP site. Positions 118–306 (TFAAEEVGVK…EFALHLRAVL (189 aa)) constitute an ATP-grasp domain. Residues glutamate 265 and glutamate 277 each contribute to the Mg(2+) site. N(1)-(5-phospho-beta-D-ribosyl)glycinamide contacts are provided by residues aspartate 284, lysine 352, and 359 to 360 (RR).

Belongs to the PurK/PurT family. In terms of assembly, homodimer.

It catalyses the reaction N(1)-(5-phospho-beta-D-ribosyl)glycinamide + formate + ATP = N(2)-formyl-N(1)-(5-phospho-beta-D-ribosyl)glycinamide + ADP + phosphate + H(+). It participates in purine metabolism; IMP biosynthesis via de novo pathway; N(2)-formyl-N(1)-(5-phospho-D-ribosyl)glycinamide from N(1)-(5-phospho-D-ribosyl)glycinamide (formate route): step 1/1. In terms of biological role, involved in the de novo purine biosynthesis. Catalyzes the transfer of formate to 5-phospho-ribosyl-glycinamide (GAR), producing 5-phospho-ribosyl-N-formylglycinamide (FGAR). Formate is provided by PurU via hydrolysis of 10-formyl-tetrahydrofolate. The sequence is that of Formate-dependent phosphoribosylglycinamide formyltransferase from Wolinella succinogenes (strain ATCC 29543 / DSM 1740 / CCUG 13145 / JCM 31913 / LMG 7466 / NCTC 11488 / FDC 602W) (Vibrio succinogenes).